A 263-amino-acid chain; its full sequence is Small ribosomal subunit protein uS2 (263 aa).

The segment at Q228 to A263 is disordered. Residues E230–A263 are compositionally biased toward acidic residues.

It belongs to the universal ribosomal protein uS2 family.

The sequence is that of Small ribosomal subunit protein uS2 from Thermosynechococcus vestitus (strain NIES-2133 / IAM M-273 / BP-1).